A 189-amino-acid chain; its full sequence is UPF0301 protein PSEEN5058 (189 aa).

This sequence belongs to the UPF0301 (AlgH) family.

The chain is UPF0301 protein PSEEN5058 from Pseudomonas entomophila (strain L48).